The sequence spans 404 residues: Cysteine desulfurase IscS (404 aa).

Pyridoxal 5'-phosphate is bound by residues 75–76, Asn155, Gln183, and 203–205; these read AT and SAH. At Lys206 the chain carries N6-(pyridoxal phosphate)lysine. Residue Thr243 participates in pyridoxal 5'-phosphate binding. Cys328 (cysteine persulfide intermediate) is an active-site residue. [2Fe-2S] cluster is bound at residue Cys328.

The protein belongs to the class-V pyridoxal-phosphate-dependent aminotransferase family. NifS/IscS subfamily. Homodimer. Forms a heterotetramer with IscU, interacts with other sulfur acceptors. Pyridoxal 5'-phosphate serves as cofactor.

The protein localises to the cytoplasm. The enzyme catalyses (sulfur carrier)-H + L-cysteine = (sulfur carrier)-SH + L-alanine. Its pathway is cofactor biosynthesis; iron-sulfur cluster biosynthesis. Functionally, master enzyme that delivers sulfur to a number of partners involved in Fe-S cluster assembly, tRNA modification or cofactor biosynthesis. Catalyzes the removal of elemental sulfur atoms from cysteine to produce alanine. Functions as a sulfur delivery protein for Fe-S cluster synthesis onto IscU, an Fe-S scaffold assembly protein, as well as other S acceptor proteins. The chain is Cysteine desulfurase IscS from Ruthia magnifica subsp. Calyptogena magnifica.